A 137-amino-acid chain; its full sequence is Altered inheritance of mitochondria protein 11 (137 aa).

The next 2 membrane-spanning stretches (helical) occupy residues 20-37 and 66-88; these read YGAA…SRAI and LTYA…CWAL.

This sequence belongs to the AIM11 family.

It is found in the membrane. In Saccharomyces cerevisiae (strain YJM789) (Baker's yeast), this protein is Altered inheritance of mitochondria protein 11 (AIM11).